A 547-amino-acid chain; its full sequence is Cilia- and flagella- associated protein 210 (547 aa).

Coiled-coil stretches lie at residues 50 to 131 (ERIR…RKKA), 183 to 251 (VKLN…MKKN), and 342 to 405 (IARD…KADK). The segment at 214 to 237 (KQIEEHKEEEEARKKSEEKDAEEM) is disordered.

As to quaternary structure, microtubule inner protein component of sperm flagellar doublet microtubules.

Its subcellular location is the cytoplasm. It is found in the cytoskeleton. The protein resides in the cilium axoneme. It localises to the flagellum axoneme. Microtubule inner protein (MIP) part of the dynein-decorated doublet microtubules (DMTs) in cilia axoneme, which is required for motile cilia beating. This is Cilia- and flagella- associated protein 210 (Cfap210) from Mus musculus (Mouse).